The primary structure comprises 489 residues: Glycogen synthase (489 aa).

Lys18 contributes to the ADP-alpha-D-glucose binding site.

This sequence belongs to the glycosyltransferase 1 family. Bacterial/plant glycogen synthase subfamily.

It catalyses the reaction [(1-&gt;4)-alpha-D-glucosyl](n) + ADP-alpha-D-glucose = [(1-&gt;4)-alpha-D-glucosyl](n+1) + ADP + H(+). It participates in glycan biosynthesis; glycogen biosynthesis. Synthesizes alpha-1,4-glucan chains using ADP-glucose. This Rhodopseudomonas palustris (strain BisA53) protein is Glycogen synthase.